A 97-amino-acid chain; its full sequence is Aspartyl/glutamyl-tRNA(Asn/Gln) amidotransferase subunit C (97 aa).

This sequence belongs to the GatC family. As to quaternary structure, heterotrimer of A, B and C subunits.

The enzyme catalyses L-glutamyl-tRNA(Gln) + L-glutamine + ATP + H2O = L-glutaminyl-tRNA(Gln) + L-glutamate + ADP + phosphate + H(+). It carries out the reaction L-aspartyl-tRNA(Asn) + L-glutamine + ATP + H2O = L-asparaginyl-tRNA(Asn) + L-glutamate + ADP + phosphate + 2 H(+). In terms of biological role, allows the formation of correctly charged Asn-tRNA(Asn) or Gln-tRNA(Gln) through the transamidation of misacylated Asp-tRNA(Asn) or Glu-tRNA(Gln) in organisms which lack either or both of asparaginyl-tRNA or glutaminyl-tRNA synthetases. The reaction takes place in the presence of glutamine and ATP through an activated phospho-Asp-tRNA(Asn) or phospho-Glu-tRNA(Gln). The polypeptide is Aspartyl/glutamyl-tRNA(Asn/Gln) amidotransferase subunit C (Parasynechococcus marenigrum (strain WH8102)).